The primary structure comprises 434 residues: ATP phosphoribosyltransferase regulatory subunit (434 aa).

The segment at 1–48 (MYGRGSGAEHSRGSGAEHFWDPRPEASSTVSSSLRPPSGARDLLPREV) is disordered. A compositionally biased stretch (low complexity) spans 27–38 (SSTVSSSLRPPS).

This sequence belongs to the class-II aminoacyl-tRNA synthetase family. HisZ subfamily. As to quaternary structure, heteromultimer composed of HisG and HisZ subunits.

It is found in the cytoplasm. Its pathway is amino-acid biosynthesis; L-histidine biosynthesis; L-histidine from 5-phospho-alpha-D-ribose 1-diphosphate: step 1/9. Required for the first step of histidine biosynthesis. May allow the feedback regulation of ATP phosphoribosyltransferase activity by histidine. The polypeptide is ATP phosphoribosyltransferase regulatory subunit (Synechococcus sp. (strain JA-2-3B'a(2-13)) (Cyanobacteria bacterium Yellowstone B-Prime)).